The following is a 199-amino-acid chain: Recombination protein RecR (199 aa).

The C4-type zinc-finger motif lies at 57-72; that stretch reads CQSCRTYTEETLCPIC. Positions 81 to 176 constitute a Toprim domain; that stretch reads STICVVETPA…MISRIAHGVP (96 aa).

Belongs to the RecR family.

Its function is as follows. May play a role in DNA repair. It seems to be involved in an RecBC-independent recombinational process of DNA repair. It may act with RecF and RecO. The polypeptide is Recombination protein RecR (Shewanella baltica (strain OS155 / ATCC BAA-1091)).